We begin with the raw amino-acid sequence, 486 residues long: Cardiolipin synthase A (486 aa).

A run of 2 helical transmembrane segments spans residues 3–23 (TFYTVVSWLIILGYWLLIAGV) and 38–58 (MAWLLVIYILPLVGIVAYLSV). PLD phosphodiesterase domains are found at residues 219–246 (MDLRQHRKMIMIDNYIAYTGSMNMVDPR) and 399–426 (EGGLLHTKSVLVDGELSLVGTVNLDMRS). Catalysis depends on residues His-224, Lys-226, Asp-231, His-404, Lys-406, and Asp-411.

This sequence belongs to the phospholipase D family. Cardiolipin synthase subfamily. ClsA sub-subfamily.

The protein resides in the cell inner membrane. The catalysed reaction is 2 a 1,2-diacyl-sn-glycero-3-phospho-(1'-sn-glycerol) = a cardiolipin + glycerol. Its function is as follows. Catalyzes the reversible phosphatidyl group transfer from one phosphatidylglycerol molecule to another to form cardiolipin (CL) (diphosphatidylglycerol) and glycerol. This Cronobacter sakazakii (strain ATCC BAA-894) (Enterobacter sakazakii) protein is Cardiolipin synthase A.